The sequence spans 734 residues: Threonine--tRNA ligase, cytoplasmic (734 aa).

Residues 1–41 (MSASEAGVTEQVKKLSVKDSSNDAVKPNKKENKKSKQQSLY) form a disordered region. The span at 11 to 30 (QVKKLSVKDSSNDAVKPNKK) shows a compositional bias: basic and acidic residues. Residues 69–135 (SMPRVPLKIV…EGEANEEIKL (67 aa)) form the TGS domain. Phosphoserine occurs at positions 195 and 289. 2 positions are modified to phosphothreonine: threonine 297 and threonine 381. Phosphoserine is present on residues serine 453 and serine 457. Threonine 460 is subject to Phosphothreonine. A Phosphoserine modification is found at serine 605.

Belongs to the class-II aminoacyl-tRNA synthetase family.

It is found in the cytoplasm. It catalyses the reaction tRNA(Thr) + L-threonine + ATP = L-threonyl-tRNA(Thr) + AMP + diphosphate + H(+). The protein is Threonine--tRNA ligase, cytoplasmic (THS1) of Saccharomyces cerevisiae (strain ATCC 204508 / S288c) (Baker's yeast).